The sequence spans 453 residues: Homogentisate 1,2-dioxygenase (453 aa).

Residue His-306 is the Proton acceptor of the active site. Fe cation-binding residues include His-349 and Glu-355. Positions 364 and 385 each coordinate homogentisate. Fe cation is bound at residue His-385.

Belongs to the homogentisate dioxygenase family. As to quaternary structure, hexamer; dimer of trimers. Requires Fe cation as cofactor.

The enzyme catalyses homogentisate + O2 = 4-maleylacetoacetate + H(+). It functions in the pathway amino-acid degradation; L-phenylalanine degradation; acetoacetate and fumarate from L-phenylalanine: step 4/6. Involved in the catabolism of homogentisate (2,5-dihydroxyphenylacetate or 2,5-OH-PhAc), a central intermediate in the degradation of phenylalanine and tyrosine. Catalyzes the oxidative ring cleavage of the aromatic ring of homogentisate to yield maleylacetoacetate. This is Homogentisate 1,2-dioxygenase from Rhizobium leguminosarum bv. trifolii (strain WSM2304).